The following is a 38-amino-acid chain: Photosystem I reaction center subunit IX (38 aa).

A helical transmembrane segment spans residues 4-24 (FLTTAPVVAAIWFTATAGILI).

The protein belongs to the PsaJ family.

The protein resides in the cellular thylakoid membrane. In terms of biological role, may help in the organization of the PsaE and PsaF subunits. The polypeptide is Photosystem I reaction center subunit IX (Synechococcus sp. (strain CC9902)).